The chain runs to 243 residues: MARRPRAESSKEGPAHLLELVRSAVPPVHSAGHPFISAGLAVTSAGAVGQVVTGRDLRWLRRVGLLAASACAVFFRHPSRVPPTRAGVVVAPADGMICVIDSATPPAELSMGNMSLPRVSIFLSLLDVHVQRAPISGEVIAVQYQPGRFGAADLAPASTENERTSVRIRTAGGTEVVVVQIAGLLARRIVCYAHIGDKLTIGDTYGLIRFGSRLDTYLPPGTEPVVQVGQRAVAGETVLADLT.

Ser212 functions as the Schiff-base intermediate with substrate; via pyruvic acid in the catalytic mechanism. Ser212 is subject to Pyruvic acid (Ser); by autocatalysis.

It belongs to the phosphatidylserine decarboxylase family. PSD-A subfamily. As to quaternary structure, heterodimer of a large membrane-associated beta subunit and a small pyruvoyl-containing alpha subunit. Requires pyruvate as cofactor. In terms of processing, is synthesized initially as an inactive proenzyme. Formation of the active enzyme involves a self-maturation process in which the active site pyruvoyl group is generated from an internal serine residue via an autocatalytic post-translational modification. Two non-identical subunits are generated from the proenzyme in this reaction, and the pyruvate is formed at the N-terminus of the alpha chain, which is derived from the carboxyl end of the proenzyme. The post-translation cleavage follows an unusual pathway, termed non-hydrolytic serinolysis, in which the side chain hydroxyl group of the serine supplies its oxygen atom to form the C-terminus of the beta chain, while the remainder of the serine residue undergoes an oxidative deamination to produce ammonia and the pyruvoyl prosthetic group on the alpha chain.

It is found in the cell membrane. The enzyme catalyses a 1,2-diacyl-sn-glycero-3-phospho-L-serine + H(+) = a 1,2-diacyl-sn-glycero-3-phosphoethanolamine + CO2. Its pathway is phospholipid metabolism; phosphatidylethanolamine biosynthesis; phosphatidylethanolamine from CDP-diacylglycerol: step 2/2. Functionally, catalyzes the formation of phosphatidylethanolamine (PtdEtn) from phosphatidylserine (PtdSer). The protein is Phosphatidylserine decarboxylase proenzyme of Mycobacterium leprae (strain Br4923).